The sequence spans 275 residues: NH(3)-dependent NAD(+) synthetase (275 aa).

46–53 serves as a coordination point for ATP; sequence GISGGQDS. D52 is a Mg(2+) binding site. Residue R140 participates in deamido-NAD(+) binding. Residue T160 participates in ATP binding. E165 is a binding site for Mg(2+). Deamido-NAD(+)-binding residues include K173 and D180. ATP is bound by residues K189 and T211. 260 to 261 is a binding site for deamido-NAD(+); sequence HK.

This sequence belongs to the NAD synthetase family. As to quaternary structure, homodimer.

The catalysed reaction is deamido-NAD(+) + NH4(+) + ATP = AMP + diphosphate + NAD(+) + H(+). It functions in the pathway cofactor biosynthesis; NAD(+) biosynthesis; NAD(+) from deamido-NAD(+) (ammonia route): step 1/1. Its function is as follows. Catalyzes the ATP-dependent amidation of deamido-NAD to form NAD. Uses ammonia as a nitrogen source. This chain is NH(3)-dependent NAD(+) synthetase, found in Salmonella agona (strain SL483).